We begin with the raw amino-acid sequence, 140 residues long: Nucleoside diphosphate kinase (140 aa).

The ATP site is built by Lys-11, Phe-59, Arg-87, Thr-93, Arg-104, and Asn-114. The Pros-phosphohistidine intermediate role is filled by His-117.

The protein belongs to the NDK family. Homotetramer. It depends on Mg(2+) as a cofactor.

Its subcellular location is the cytoplasm. The enzyme catalyses a 2'-deoxyribonucleoside 5'-diphosphate + ATP = a 2'-deoxyribonucleoside 5'-triphosphate + ADP. The catalysed reaction is a ribonucleoside 5'-diphosphate + ATP = a ribonucleoside 5'-triphosphate + ADP. Major role in the synthesis of nucleoside triphosphates other than ATP. The ATP gamma phosphate is transferred to the NDP beta phosphate via a ping-pong mechanism, using a phosphorylated active-site intermediate. This is Nucleoside diphosphate kinase from Dinoroseobacter shibae (strain DSM 16493 / NCIMB 14021 / DFL 12).